Here is a 171-residue protein sequence, read N- to C-terminus: Dual specificity protein phosphatase OPG106 (171 aa).

Residues 23–171 (SPTIMTRVTN…IIEKYVIDKN (149 aa)) enclose the Tyrosine-protein phosphatase domain. Cys110 (phosphocysteine intermediate) is an active-site residue.

The protein belongs to the protein-tyrosine phosphatase family. Non-receptor class dual specificity subfamily. In terms of assembly, homodimer.

It is found in the virion. The protein resides in the host cytoplasm. The enzyme catalyses O-phospho-L-tyrosyl-[protein] + H2O = L-tyrosyl-[protein] + phosphate. The catalysed reaction is O-phospho-L-seryl-[protein] + H2O = L-seryl-[protein] + phosphate. Its function is as follows. Serine/tyrosine phosphatase which down-regulates cellular antiviral response by dephosphorylating activated host STAT1 and blocking interferon (IFN)-stimulated innate immune responses. Dephosphorylates the OPG144 protein. The chain is Dual specificity protein phosphatase OPG106 (OPG106) from Homo sapiens (Human).